A 100-amino-acid polypeptide reads, in one-letter code: Small ribosomal subunit protein uS14 (100 aa).

The protein belongs to the universal ribosomal protein uS14 family. Part of the 30S ribosomal subunit. Contacts proteins S3 and S10.

Its function is as follows. Binds 16S rRNA, required for the assembly of 30S particles and may also be responsible for determining the conformation of the 16S rRNA at the A site. The polypeptide is Small ribosomal subunit protein uS14 (Prochlorococcus marinus (strain MIT 9211)).